We begin with the raw amino-acid sequence, 1049 residues long: Isoleucine--tRNA ligase (1049 aa).

A 'HIGH' region motif is present at residues 48-58 (PYTTGRIHLGT). A 'KMSKS' region motif is present at residues 596-600 (KMSKS). Lys599 contributes to the ATP binding site.

Belongs to the class-I aminoacyl-tRNA synthetase family. IleS type 2 subfamily. As to quaternary structure, monomer. The cofactor is Zn(2+).

The protein resides in the cytoplasm. The catalysed reaction is tRNA(Ile) + L-isoleucine + ATP = L-isoleucyl-tRNA(Ile) + AMP + diphosphate. Catalyzes the attachment of isoleucine to tRNA(Ile). As IleRS can inadvertently accommodate and process structurally similar amino acids such as valine, to avoid such errors it has two additional distinct tRNA(Ile)-dependent editing activities. One activity is designated as 'pretransfer' editing and involves the hydrolysis of activated Val-AMP. The other activity is designated 'posttransfer' editing and involves deacylation of mischarged Val-tRNA(Ile). The protein is Isoleucine--tRNA ligase of Methanothrix thermoacetophila (strain DSM 6194 / JCM 14653 / NBRC 101360 / PT) (Methanosaeta thermophila).